The primary structure comprises 176 residues: Ribosome maturation factor RimM (176 aa).

Residues 97–176 (EDEFYWRDLI…QILVDWDPDF (80 aa)) enclose the PRC barrel domain.

It belongs to the RimM family. Binds ribosomal protein uS19.

It localises to the cytoplasm. Its function is as follows. An accessory protein needed during the final step in the assembly of 30S ribosomal subunit, possibly for assembly of the head region. Essential for efficient processing of 16S rRNA. May be needed both before and after RbfA during the maturation of 16S rRNA. It has affinity for free ribosomal 30S subunits but not for 70S ribosomes. This is Ribosome maturation factor RimM from Shewanella sp. (strain MR-4).